A 379-amino-acid polypeptide reads, in one-letter code: Protein-glutamate methylesterase/protein-glutamine glutaminase (379 aa).

Residues 4–121 (KVLVVDDSSF…AKNSDEAGSL (118 aa)) enclose the Response regulatory domain. D55 is modified (4-aspartylphosphate). In terms of domain architecture, CheB-type methylesterase spans 185–379 (SGKEYKLLAI…ASMVKEISRG (195 aa)). Catalysis depends on residues S197, H224, and D321.

Belongs to the CheB family. Post-translationally, phosphorylated by CheA. Phosphorylation of the N-terminal regulatory domain activates the methylesterase activity.

The protein localises to the cytoplasm. It carries out the reaction [protein]-L-glutamate 5-O-methyl ester + H2O = L-glutamyl-[protein] + methanol + H(+). The enzyme catalyses L-glutaminyl-[protein] + H2O = L-glutamyl-[protein] + NH4(+). Functionally, involved in chemotaxis. Part of a chemotaxis signal transduction system that modulates chemotaxis in response to various stimuli. Catalyzes the demethylation of specific methylglutamate residues introduced into the chemoreceptors (methyl-accepting chemotaxis proteins or MCP) by CheR. Also mediates the irreversible deamidation of specific glutamine residues to glutamic acid. This chain is Protein-glutamate methylesterase/protein-glutamine glutaminase, found in Colwellia psychrerythraea (strain 34H / ATCC BAA-681) (Vibrio psychroerythus).